Reading from the N-terminus, the 405-residue chain is tRNA-specific 2-thiouridylase MnmA (405 aa).

ATP is bound by residues 41–48 (AMSGGVDS) and Leu67. Cys135 serves as the catalytic Nucleophile. A disulfide bond links Cys135 and Cys231. Gly159 lines the ATP pocket. Residues 181-183 (KDQ) are interaction with tRNA. Cys231 serves as the catalytic Cysteine persulfide intermediate.

This sequence belongs to the MnmA/TRMU family.

The protein resides in the cytoplasm. It carries out the reaction S-sulfanyl-L-cysteinyl-[protein] + uridine(34) in tRNA + AH2 + ATP = 2-thiouridine(34) in tRNA + L-cysteinyl-[protein] + A + AMP + diphosphate + H(+). Its function is as follows. Catalyzes the 2-thiolation of uridine at the wobble position (U34) of tRNA, leading to the formation of s(2)U34. The chain is tRNA-specific 2-thiouridylase MnmA from Maricaulis maris (strain MCS10) (Caulobacter maris).